Consider the following 308-residue polypeptide: 4-diphosphocytidyl-2-C-methyl-D-erythritol kinase (308 aa).

Lys-23 is a catalytic residue. An ATP-binding site is contributed by 108–118 (PVAAGIGGGSA). The active site involves Asp-150.

The protein belongs to the GHMP kinase family. IspE subfamily.

The enzyme catalyses 4-CDP-2-C-methyl-D-erythritol + ATP = 4-CDP-2-C-methyl-D-erythritol 2-phosphate + ADP + H(+). It participates in isoprenoid biosynthesis; isopentenyl diphosphate biosynthesis via DXP pathway; isopentenyl diphosphate from 1-deoxy-D-xylulose 5-phosphate: step 3/6. Functionally, catalyzes the phosphorylation of the position 2 hydroxy group of 4-diphosphocytidyl-2C-methyl-D-erythritol. The sequence is that of 4-diphosphocytidyl-2-C-methyl-D-erythritol kinase from Nitrobacter winogradskyi (strain ATCC 25391 / DSM 10237 / CIP 104748 / NCIMB 11846 / Nb-255).